An 87-amino-acid chain; its full sequence is Small ribosomal subunit protein bS18 (87 aa).

The protein belongs to the bacterial ribosomal protein bS18 family. In terms of assembly, part of the 30S ribosomal subunit. Forms a tight heterodimer with protein bS6.

Functionally, binds as a heterodimer with protein bS6 to the central domain of the 16S rRNA, where it helps stabilize the platform of the 30S subunit. This is Small ribosomal subunit protein bS18 from Mesomycoplasma hyopneumoniae (strain 232) (Mycoplasma hyopneumoniae).